The sequence spans 72 residues: Translation initiation factor IF-1 (72 aa).

An S1-like domain is found at 1-72 (MSKEDMIEFS…SKGRITFRFK (72 aa)).

The protein belongs to the IF-1 family. As to quaternary structure, component of the 30S ribosomal translation pre-initiation complex which assembles on the 30S ribosome in the order IF-2 and IF-3, IF-1 and N-formylmethionyl-tRNA(fMet); mRNA recruitment can occur at any time during PIC assembly.

Its subcellular location is the cytoplasm. One of the essential components for the initiation of protein synthesis. Stabilizes the binding of IF-2 and IF-3 on the 30S subunit to which N-formylmethionyl-tRNA(fMet) subsequently binds. Helps modulate mRNA selection, yielding the 30S pre-initiation complex (PIC). Upon addition of the 50S ribosomal subunit IF-1, IF-2 and IF-3 are released leaving the mature 70S translation initiation complex. This chain is Translation initiation factor IF-1, found in Gluconacetobacter diazotrophicus (strain ATCC 49037 / DSM 5601 / CCUG 37298 / CIP 103539 / LMG 7603 / PAl5).